The sequence spans 315 residues: DNA-directed RNA polymerase subunit alpha (315 aa).

Residues 1–228 form an alpha N-terminal domain (alpha-NTD) region; the sequence is MLEIEKPKIE…EHFKLFMTLT (228 aa). An alpha C-terminal domain (alpha-CTD) region spans residues 245-315; it reads KEKVLEMAIE…LGLSLKQNED (71 aa).

It belongs to the RNA polymerase alpha chain family. As to quaternary structure, homodimer. The RNAP catalytic core consists of 2 alpha, 1 beta, 1 beta' and 1 omega subunit. When a sigma factor is associated with the core the holoenzyme is formed, which can initiate transcription.

It carries out the reaction RNA(n) + a ribonucleoside 5'-triphosphate = RNA(n+1) + diphosphate. Functionally, DNA-dependent RNA polymerase catalyzes the transcription of DNA into RNA using the four ribonucleoside triphosphates as substrates. The protein is DNA-directed RNA polymerase subunit alpha of Clostridium kluyveri (strain NBRC 12016).